The following is a 264-amino-acid chain: Large ribosomal subunit protein mL50 (264 aa).

Residues 1 to 75 (MSSLLKLHCI…EEGTNEASSQ (75 aa)) constitute a mitochondrion transit peptide.

The protein belongs to the mitochondrion-specific ribosomal protein mL50 family. In terms of assembly, component of the mitochondrial large ribosomal subunit (mt-LSU). Mature yeast 74S mitochondrial ribosomes consist of a small (37S) and a large (54S) subunit. The 37S small subunit contains a 15S ribosomal RNA (15S mt-rRNA) and 34 different proteins. The 54S large subunit contains a 21S rRNA (21S mt-rRNA) and 46 different proteins.

Its subcellular location is the mitochondrion. Functionally, component of the mitochondrial ribosome (mitoribosome), a dedicated translation machinery responsible for the synthesis of mitochondrial genome-encoded proteins, including at least some of the essential transmembrane subunits of the mitochondrial respiratory chain. The mitoribosomes are attached to the mitochondrial inner membrane and translation products are cotranslationally integrated into the membrane. The polypeptide is Large ribosomal subunit protein mL50 (MRPL13) (Saccharomyces cerevisiae (strain ATCC 204508 / S288c) (Baker's yeast)).